We begin with the raw amino-acid sequence, 214 residues long: ATP-dependent Clp protease proteolytic subunit 2 (214 aa).

S110 functions as the Nucleophile in the catalytic mechanism. H135 is an active-site residue.

Belongs to the peptidase S14 family. As to quaternary structure, fourteen ClpP subunits assemble into 2 heptameric rings which stack back to back to give a disk-like structure with a central cavity, resembling the structure of eukaryotic proteasomes.

It is found in the cytoplasm. The catalysed reaction is Hydrolysis of proteins to small peptides in the presence of ATP and magnesium. alpha-casein is the usual test substrate. In the absence of ATP, only oligopeptides shorter than five residues are hydrolyzed (such as succinyl-Leu-Tyr-|-NHMec, and Leu-Tyr-Leu-|-Tyr-Trp, in which cleavage of the -Tyr-|-Leu- and -Tyr-|-Trp bonds also occurs).. In terms of biological role, cleaves peptides in various proteins in a process that requires ATP hydrolysis. Has a chymotrypsin-like activity. Plays a major role in the degradation of misfolded proteins. The sequence is that of ATP-dependent Clp protease proteolytic subunit 2 from Mycobacterium bovis (strain ATCC BAA-935 / AF2122/97).